The following is a 126-amino-acid chain: Ribosome-binding factor A (126 aa).

This sequence belongs to the RbfA family. Monomer. Binds 30S ribosomal subunits, but not 50S ribosomal subunits or 70S ribosomes.

It localises to the cytoplasm. One of several proteins that assist in the late maturation steps of the functional core of the 30S ribosomal subunit. Associates with free 30S ribosomal subunits (but not with 30S subunits that are part of 70S ribosomes or polysomes). Required for efficient processing of 16S rRNA. May interact with the 5'-terminal helix region of 16S rRNA. The chain is Ribosome-binding factor A from Treponema pallidum (strain Nichols).